Consider the following 288-residue polypeptide: Protein CREG2 (288 aa).

The first 31 residues, 1–31 (MSLSGRERPAWPGSRLSWLLCCSALLSPAAG), serve as a signal peptide directing secretion. Residues 78-100 (AHKEDTHLRPRGSARARPAPAAR) form a disordered region. Residue asparagine 164 is glycosylated (N-linked (GlcNAc...) asparagine).

This sequence belongs to the CREG family. As to expression, brain specific.

Its subcellular location is the secreted. The polypeptide is Protein CREG2 (Creg2) (Mus musculus (Mouse)).